We begin with the raw amino-acid sequence, 1367 residues long: Dynactin, 150 kDa isoform (1367 aa).

Residues 28-70 (GETAFAPGTWVGIELDEPSGKNDGSVQGERYFNCEMGYGMFVR) enclose the CAP-Gly domain. The tract at residues 76–318 (VIAQPPPPPP…NLKATTITPR (243 aa)) is disordered. Low complexity-rich tracts occupy residues 88–99 (TFRRSVTTRPTS) and 132–149 (PSRT…RSPT). Residues 150 to 163 (KQLATASSSGNPSR) are compositionally biased toward polar residues. 2 stretches are compositionally biased toward low complexity: residues 164–190 (SGTP…SRHS) and 243–259 (STGS…KRGS). Coiled-coil stretches lie at residues 321 to 598 (ITNT…MQEE), 637 to 698 (LQSD…EAEQ), and 1039 to 1199 (AELK…RARL).

The protein belongs to the dynactin 150 kDa subunit family. Large macromolecular complex of at least 10 components; p150(glued) binds directly to microtubules and to cytoplasmic dynein.

The protein resides in the cytoplasm. Its subcellular location is the cytoskeleton. Required for the cytoplasmic dynein-driven retrograde movement of vesicles and organelles along microtubules. Dynein-dynactin interaction is a key component of the mechanism of axonal transport of vesicles and organelles. The protein is Dynactin, 150 kDa isoform (ro-3) of Neurospora crassa (strain ATCC 24698 / 74-OR23-1A / CBS 708.71 / DSM 1257 / FGSC 987).